The following is a 210-amino-acid chain: Prolactin (210 aa).

The N-terminal stretch at 1 to 23 is a signal peptide; it reads MTQGSRLYFAVAVLMCGFVSING. Disulfide bonds link cysteine 69–cysteine 183 and cysteine 200–cysteine 210.

This sequence belongs to the somatotropin/prolactin family. As to expression, pituitary gland.

Its subcellular location is the secreted. The polypeptide is Prolactin (prl1) (Carassius auratus (Goldfish)).